Consider the following 282-residue polypeptide: Caspase-3 (282 aa).

Active-site residues include His131 and Cys174.

Belongs to the peptidase C14A family. In terms of assembly, heterotetramer that consists of two anti-parallel arranged heterodimers, each one formed by a 17 kDa (p17) and a 12 kDa (p12) subunit.

The protein resides in the cytoplasm. The catalysed reaction is Strict requirement for an Asp residue at positions P1 and P4. It has a preferred cleavage sequence of Asp-Xaa-Xaa-Asp-|- with a hydrophobic amino-acid residue at P2 and a hydrophilic amino-acid residue at P3, although Val or Ala are also accepted at this position.. Functionally, important mediator of apoptosis. At the onset of apoptosis, it proteolytically cleaves poly(ADP-ribose) polymerase PARP1 at a '216-Asp-|-Gly-217' bond. The polypeptide is Caspase-3 (casp3) (Xenopus laevis (African clawed frog)).